A 252-amino-acid chain; its full sequence is UPF0736 protein OB1207 (252 aa).

It belongs to the UPF0736 family.

The protein is UPF0736 protein OB1207 of Oceanobacillus iheyensis (strain DSM 14371 / CIP 107618 / JCM 11309 / KCTC 3954 / HTE831).